Consider the following 338-residue polypeptide: Terpene synthase 1 (338 aa).

Residues 80 to 85 carry the DDxx(x)D/E motif motif; it reads DDALDS. An NDxxSxxxD/E motif motif is present at residues 220-228; it reads NDLVSYEKE.

It belongs to the terpene synthase family.

The enzyme catalyses (2E,6E)-farnesyl diphosphate = (2S,3R,6S,9S)-(-)-protoillud-7-ene + diphosphate. Terpene synthase that converts its substrate farnesyl diphosphate (FPP) into the sesquiterpene protoillud-7-ene. This Cavenderia fasciculata (Slime mold) protein is Terpene synthase 1.